Here is a 116-residue protein sequence, read N- to C-terminus: MDKKTSRLRRATRARKKIQELGVNRLVVHRTPRHIYAQVINPEAQVLAAASTVEKAVKELLKSTGNVDAAKAVGKFVAERAIEKGVTSVAFDRSGFKYHGRVAALADAAREAGLKF.

This sequence belongs to the universal ribosomal protein uL18 family. In terms of assembly, part of the 50S ribosomal subunit; part of the 5S rRNA/L5/L18/L25 subcomplex. Contacts the 5S and 23S rRNAs.

This is one of the proteins that bind and probably mediate the attachment of the 5S RNA into the large ribosomal subunit, where it forms part of the central protuberance. This chain is Large ribosomal subunit protein uL18, found in Shewanella baltica (strain OS223).